Here is a 485-residue protein sequence, read N- to C-terminus: GTPase Der (485 aa).

EngA-type G domains follow at residues 3-167 and 176-349; these read PTIA…PEPE and PVFA…NAAM. Residues 9-16, 56-60, 119-122, 182-189, 229-233, and 294-297 each bind GTP; these read GRPNVGKS, DTGGF, NKGE, DTAGV, and NKWD. One can recognise a KH-like domain in the interval 350–434; that stretch reads IKMPTPKITR…PLRIQYNVSE (85 aa). The tract at residues 435-485 is disordered; sequence NPYENAEDKPKKKPLRRVSLSNRIEKREGRKEEKNRFKKKTKVSVKKQFSK. The span at 457-469 shows a compositional bias: basic and acidic residues; that stretch reads RIEKREGRKEEKN. A compositionally biased stretch (basic residues) spans 470 to 485; that stretch reads RFKKKTKVSVKKQFSK.

Belongs to the TRAFAC class TrmE-Era-EngA-EngB-Septin-like GTPase superfamily. EngA (Der) GTPase family. As to quaternary structure, associates with the 50S ribosomal subunit.

Functionally, GTPase that plays an essential role in the late steps of ribosome biogenesis. The chain is GTPase Der from Neisseria meningitidis serogroup B (strain ATCC BAA-335 / MC58).